Here is a 297-residue protein sequence, read N- to C-terminus: Nitrogenase iron protein (297 aa).

11-18 (GKGGIGKS) contacts ATP. Position 99 (cysteine 99) interacts with [4Fe-4S] cluster. ADP-ribosylarginine; by dinitrogenase reductase ADP-ribosyltransferase is present on arginine 102. Cysteine 133 serves as a coordination point for [4Fe-4S] cluster.

Belongs to the NifH/BchL/ChlL family. In terms of assembly, homodimer. Requires [4Fe-4S] cluster as cofactor. In terms of processing, the reversible ADP-ribosylation of Arg-102 inactivates the nitrogenase reductase and regulates nitrogenase activity.

It catalyses the reaction N2 + 8 reduced [2Fe-2S]-[ferredoxin] + 16 ATP + 16 H2O = H2 + 8 oxidized [2Fe-2S]-[ferredoxin] + 2 NH4(+) + 16 ADP + 16 phosphate + 6 H(+). The key enzymatic reactions in nitrogen fixation are catalyzed by the nitrogenase complex, which has 2 components: the iron protein and the molybdenum-iron protein. The sequence is that of Nitrogenase iron protein from Mesorhizobium japonicum (strain LMG 29417 / CECT 9101 / MAFF 303099) (Mesorhizobium loti (strain MAFF 303099)).